The primary structure comprises 692 residues: MAREYPLEKTRNIGIMAHIDAGKTTTTERILFYTGRVHRMGEVHDGNATMDWMIQEQERGITITSAATTCFWRNHRINIIDTPGHVDFTVEVERSLRVLDGAVAVFCSVGGVEPQSETVWRQADKYGVPRIAYINKMDRVGADFFRGVRMIAERLGANPVPIQLPIGAEDSFQGMVDLINMKAIYYTDELGTTLDEEPIPAEMEDLVQEYREKLLEAVAESDEELMIKYLEGEELTPEEIKAGIRKATIAVKMVPVLCGSSFKNKGVQPLLDAIVDFLPAPTDVPAIQGVDPETGDEDERHSSDNEPFAALAFKIMADPYVGKLTFFRVYSGTLKSGSYVYNSTKGRRERIGRILRMHANHREEIDEAYAGDIAAAVGLKETTTGDTLCDEQHPIVLEAMEFPEPVISVAIEPKTKADQEKMSIALQKLAEEDPTFRMYTDQETGQTIISGMGELHLEIIVDRLLREFKVGAKVGRPQVAYKETIRRPVKAEGKFIRQTGGHGQYGHVIIEIEPQEPGKGYEFVNKIVGGVIPKEYIPAVDAGIQEAMANGVLAGYPVVDVRATLVDGSYHEVDSSEMAFKIAGSLAFKDAAKKAQPVLLEPVMRVEVVVPDEYMGDVIGDLNSRRGRVEGMEPRAGAQVIRAHVPLAEMFGYATDLRSRTQGRGTYVMQFDHYEEVPKNIAEEIISKRQGA.

Positions 8–282 (EKTRNIGIMA…AIVDFLPAPT (275 aa)) constitute a tr-type G domain. GTP-binding positions include 17 to 24 (AHIDAGKT), 81 to 85 (DTPGH), and 135 to 138 (NKMD).

It belongs to the TRAFAC class translation factor GTPase superfamily. Classic translation factor GTPase family. EF-G/EF-2 subfamily.

The protein resides in the cytoplasm. Catalyzes the GTP-dependent ribosomal translocation step during translation elongation. During this step, the ribosome changes from the pre-translocational (PRE) to the post-translocational (POST) state as the newly formed A-site-bound peptidyl-tRNA and P-site-bound deacylated tRNA move to the P and E sites, respectively. Catalyzes the coordinated movement of the two tRNA molecules, the mRNA and conformational changes in the ribosome. This is Elongation factor G from Moorella thermoacetica (strain ATCC 39073 / JCM 9320).